The primary structure comprises 753 residues: 5-methyltetrahydropteroyltriglutamate--homocysteine methyltransferase (753 aa).

5-methyltetrahydropteroyltri-L-glutamate contacts are provided by residues 17–20 (RELK) and Lys117. Residues 431 to 433 (IGS) and Glu484 contribute to the L-homocysteine site. L-methionine-binding positions include 431-433 (IGS) and Glu484. Residues 515 to 516 (RC) and Trp561 each bind 5-methyltetrahydropteroyltri-L-glutamate. Position 599 (Asp599) interacts with L-homocysteine. An L-methionine-binding site is contributed by Asp599. A 5-methyltetrahydropteroyltri-L-glutamate-binding site is contributed by Glu605. Positions 641, 643, and 665 each coordinate Zn(2+). Catalysis depends on His694, which acts as the Proton donor. Cys726 contributes to the Zn(2+) binding site.

It belongs to the vitamin-B12 independent methionine synthase family. In terms of assembly, monomer. The cofactor is Zn(2+).

It catalyses the reaction 5-methyltetrahydropteroyltri-L-glutamate + L-homocysteine = tetrahydropteroyltri-L-glutamate + L-methionine. The protein operates within amino-acid biosynthesis; L-methionine biosynthesis via de novo pathway; L-methionine from L-homocysteine (MetE route): step 1/1. Functionally, catalyzes the transfer of a methyl group from 5-methyltetrahydrofolate to homocysteine resulting in methionine formation. This chain is 5-methyltetrahydropteroyltriglutamate--homocysteine methyltransferase, found in Escherichia coli (strain K12).